The following is a 188-amino-acid chain: MSIKSDRWIRRMAEQHGMIEPFEPGQVRHAGEERIVSYGTSSYGYDVRCADEFKIFTNINSSIVDPKAFDARSFVDVKSDVCIIPPNSFALARTVEYFRIPRSVLTICLGKSTYARCGIIVNVTPLEPEWEGHVTLEFSNTTPLPAKIYANEGVAQMLFLESDEVCETSYKDRGGKYQGQVGVTLPKT.

DCTP contacts are provided by residues Lys111–Arg116, Thr135–Glu137, Gln156, Tyr170, and Gln180. The active-site Proton donor/acceptor is Glu137.

Belongs to the dCTP deaminase family. As to quaternary structure, homotrimer.

It catalyses the reaction dCTP + H2O + H(+) = dUTP + NH4(+). The protein operates within pyrimidine metabolism; dUMP biosynthesis; dUMP from dCTP (dUTP route): step 1/2. Its function is as follows. Catalyzes the deamination of dCTP to dUTP. This Thioalkalivibrio sulfidiphilus (strain HL-EbGR7) protein is dCTP deaminase.